A 360-amino-acid chain; its full sequence is Putative transport protein BU123 (360 aa).

9 helical membrane passes run 18-38 (IFIV…ILGF), 39-59 (FWAS…QKIL), 66-86 (AVII…FFLV), 161-181 (GLFI…YWNG), 204-224 (LLLA…TALI), 230-250 (GIGL…IIFF), 251-271 (SCLI…WLYW), 280-300 (ILLI…PFFI), and 316-336 (IGGL…VLVI).

It belongs to the autoinducer-2 exporter (AI-2E) (TC 2.A.86) family.

The protein localises to the cell membrane. The chain is Putative transport protein BU123 from Buchnera aphidicola subsp. Acyrthosiphon pisum (strain APS) (Acyrthosiphon pisum symbiotic bacterium).